The following is a 122-amino-acid chain: HetP-like commitment protein Alr3234 (122 aa).

Belongs to the HetP family. As to quaternary structure, in bacterial two-hybrid assays interacts robustly with itself, Asl1930, Alr2902 and HetR and weakly with HetP.

In terms of biological role, delays heterocyst differentiation and commitment when nitrogen is limiting. Interplay between the 4 HetP paralogs controls the timing of commitment to heterocyst formation and its duration. Epistatic analysis show that the 3 paralogs act upstream of hetP to delay commitment (asl1930, alr3234) or inhibit development (alr2902). Asl1930 and Alr3234 must also attenuate the activity of Alr2902. Ectopic expression does not complement a hetP deletion. The polypeptide is HetP-like commitment protein Alr3234 (Nostoc sp. (strain PCC 7120 / SAG 25.82 / UTEX 2576)).